The following is a 57-amino-acid chain: Small ribosomal subunit protein bS21 (57 aa).

The protein belongs to the bacterial ribosomal protein bS21 family.

This Geobacillus kaustophilus (strain HTA426) protein is Small ribosomal subunit protein bS21.